The sequence spans 864 residues: DNA mismatch repair protein MutS (864 aa).

G607 to S614 provides a ligand contact to ATP.

Belongs to the DNA mismatch repair MutS family.

Its function is as follows. This protein is involved in the repair of mismatches in DNA. It is possible that it carries out the mismatch recognition step. This protein has a weak ATPase activity. In Neisseria gonorrhoeae (strain ATCC 700825 / FA 1090), this protein is DNA mismatch repair protein MutS.